The sequence spans 239 residues: Gamma-lactamase MBL2 (239 aa).

Zn(2+) is bound by residues histidine 56, histidine 58, aspartate 60, histidine 61, histidine 141, and aspartate 165.

Belongs to the metallo-beta-lactamase superfamily.

Its function is as follows. Gamma-lactamase; part of the Fusarium detoxification of benzoxazolinone cluster 2 (FDB2) involved in the degradation of benzoxazolinones produced by the host plant. Maize, wheat, and rye produce the 2 benzoxazinone phytoanticipins 2,4-dihy-droxy-7-methoxy-1,4-benzoxazin-3-one (DIMBOA) and 2,4-dihydroxy-1,4-benzoxazin-3-one (DIBOA) that, due to their inherent instability once released, spontaneously degrade to the more stable corresponding benzoxazolinones, 6-methoxy-2-benzoxazolinone (MBOA) and 2-benzoxazolinone (BOA), respectively. The first step in the detoxification of benzoxazolinones involves the hydrolysis of the cyclic ester bond of benzoxazolinones by the FDB1 cluster gamma-lactamase MBL1 to aminophenols. MBL1 is able to convert BOA into 2-aminophenol (2-AP), as well as MBOA into 5-methoxy-2-aminophenol (2-AMP). The FDB2 cluster N-malonyltransferase FDB2/NAT1 then metabolizes aminophenols via N-malonylation to non-toxic malonamic acids. FDB2/NAT1 converts 2-AP into N-(2-hydroxyphenyl) malonamic acid (HPMA) and 2-AMP into N-(2-hydroxy-4-methoxyphenyl) malonamic acid (HMPMA). The duplicated dienlactone hydrolases DLH1 and DLH2 may provide redundant function for hydrolyzing the lactone moiety in the BOA molecule. The roles of the amidases and other enzymes encoded by the 2 FDB clusters have not been identified so far. This is Gamma-lactamase MBL2 from Gibberella moniliformis (strain M3125 / FGSC 7600) (Maize ear and stalk rot fungus).